We begin with the raw amino-acid sequence, 369 residues long: Peptide chain release factor 2 (369 aa).

Gln252 is modified (N5-methylglutamine).

Belongs to the prokaryotic/mitochondrial release factor family. In terms of processing, methylated by PrmC. Methylation increases the termination efficiency of RF2.

It localises to the cytoplasm. Functionally, peptide chain release factor 2 directs the termination of translation in response to the peptide chain termination codons UGA and UAA. The protein is Peptide chain release factor 2 of Staphylococcus aureus (strain MRSA252).